The chain runs to 273 residues: Shikimate dehydrogenase (NADP(+)) (273 aa).

Shikimate contacts are provided by residues 14-16 (SKS) and threonine 61. Catalysis depends on lysine 65, which acts as the Proton acceptor. Glutamate 77 is an NADP(+) binding site. Shikimate contacts are provided by asparagine 86 and aspartate 102. NADP(+) is bound by residues 126 to 130 (GAGGA), 150 to 155 (NRTYEK), and methionine 213. Shikimate is bound at residue tyrosine 215. Glycine 237 is a binding site for NADP(+).

The protein belongs to the shikimate dehydrogenase family. Homodimer.

The catalysed reaction is shikimate + NADP(+) = 3-dehydroshikimate + NADPH + H(+). It functions in the pathway metabolic intermediate biosynthesis; chorismate biosynthesis; chorismate from D-erythrose 4-phosphate and phosphoenolpyruvate: step 4/7. Functionally, involved in the biosynthesis of the chorismate, which leads to the biosynthesis of aromatic amino acids. Catalyzes the reversible NADPH linked reduction of 3-dehydroshikimate (DHSA) to yield shikimate (SA). This is Shikimate dehydrogenase (NADP(+)) from Aliivibrio fischeri (strain MJ11) (Vibrio fischeri).